The primary structure comprises 317 residues: tRNA(Ile)-lysidine synthase (317 aa).

30–35 provides a ligand contact to ATP; sequence SGGSDS.

It belongs to the tRNA(Ile)-lysidine synthase family.

It is found in the cytoplasm. The enzyme catalyses cytidine(34) in tRNA(Ile2) + L-lysine + ATP = lysidine(34) in tRNA(Ile2) + AMP + diphosphate + H(+). Functionally, ligates lysine onto the cytidine present at position 34 of the AUA codon-specific tRNA(Ile) that contains the anticodon CAU, in an ATP-dependent manner. Cytidine is converted to lysidine, thus changing the amino acid specificity of the tRNA from methionine to isoleucine. The chain is tRNA(Ile)-lysidine synthase from Chlamydia caviae (strain ATCC VR-813 / DSM 19441 / 03DC25 / GPIC) (Chlamydophila caviae).